Consider the following 704-residue polypeptide: MDKLRGARPLRLLLLLLALLPALRGQDLSMEECCDKGVEWANKNRICTSLPLISESRECSMTQVQCCRSKLEEHYCSDGIEFASVHEECDSHNGENSTCEAEYFKKCCYCCLLGKTAQVQGQSCEPNLKIGYQCGIVFRACCVKGQEGTDVSISDDAPKKEQVEISKEELDQEDPYLHDGCRGGGPCSQQCRDTGSSYVCSCFVGYQLQPDGVNCEDINECITGTHSCGIGQTCVNTLGSFRCQRDTSCGTGYELTDDSRCKDIDECETGTHNCPPDFICQNTPGSFRCRPKLQCMNGFIQDALGNCIDINECLSTNMPCPAGQICINTDGSYTCQRISPSCGRGYHLNEDGTRCVDVDECSSSDQPCGEGHVCINGPGNYRCECKSGYSFDVISRTCIDINECRRYPGRLCAHKCENTPGSYYCTCTMGFKLSSDGRSCEDLNECESSPCSQECANVYGSYQCYCRRGFQLSDIDGISCEDIDECALPTGGHICSFRCINIPGSFQCTCPSTGYRLAPNARNCQDIDECVAETHNCSFNETCFNIQGGFRCLSLECPENYRKSGDTVRLEKTDTIRCIKSCRPNDVNCVLDPVHTISHTVISLPTFREFTRPEEIIFLRAITPTYPANQADIIFDITEGNLRESFDIIKRYMDGMTVGVVRQVRPIVGPFHAILKLEMNYVMGGVVSHRNIVNVHIFVSEYWF.

Positions 1-25 (MDKLRGARPLRLLLLLLALLPALRG) are cleaved as a signal peptide. 35 disulfide bridges follow: C33/C59, C34/C66, C47/C67, C76/C107, C89/C108, C110/C134, C111/C141, C124/C142, C181/C191, C187/C200, C202/C215, C221/C234, C228/C243, C249/C261, C267/C280, C274/C289, C295/C307, C313/C326, C320/C335, C342/C355, C361/C374, C368/C383, C385/C398, C404/C416, C412/C425, C427/C440, C446/C455, C451/C464, C466/C480, C486/C499, C495/C508, C510/C524, C530/C543, C537/C552, and C557/C578. Anaphylatoxin-like domains follow at residues 33 to 74 (CCDK…LEEH), 75 to 109 (YCSDGIEFASVHEECDSHNGENSTCEAEYFKKCCY), and 110 to 142 (CCLLGKTAQVQGQSCEPNLKIGYQCGIVFRACC). N96 carries an N-linked (GlcNAc...) asparagine glycan. One can recognise an EGF-like 1 domain in the interval 177–216 (LHDGCRGGGPCSQQCRDTGSSYVCSCFVGYQLQPDGVNCE). The 46-residue stretch at 217–262 (DINECITGTHSCGIGQTCVNTLGSFRCQRDTSCGTGYELTDDSRCK) folds into the EGF-like 2; calcium-binding domain. An EGF-like 3; calcium-binding domain is found at 263–308 (DIDECETGTHNCPPDFICQNTPGSFRCRPKLQCMNGFIQDALGNCI). Positions 309–356 (DINECLSTNMPCPAGQICINTDGSYTCQRISPSCGRGYHLNEDGTRCV) constitute an EGF-like 4; calcium-binding domain. One can recognise an EGF-like 5; calcium-binding domain in the interval 357–399 (DVDECSSSDQPCGEGHVCINGPGNYRCECKSGYSFDVISRTCI). A self-association and FN1-binding region spans residues 357 to 441 (DVDECSSSDQ…KLSSDGRSCE (85 aa)). The EGF-like 6; calcium-binding domain occupies 400–441 (DINECRRYPGRLCAHKCENTPGSYYCTCTMGFKLSSDGRSCE). One can recognise an EGF-like 7; calcium-binding domain in the interval 442 to 481 (DLNECESSPCSQECANVYGSYQCYCRRGFQLSDIDGISCE). An EGF-like 8; calcium-binding domain is found at 482–525 (DIDECALPTGGHICSFRCINIPGSFQCTCPSTGYRLAPNARNCQ). Residues 526-579 (DIDECVAETHNCSFNETCFNIQGGFRCLSLECPENYRKSGDTVRLEKTDTIRCI) enclose the EGF-like 9; calcium-binding domain. 2 N-linked (GlcNAc...) asparagine glycosylation sites follow: N536 and N540.

It belongs to the fibulin family. As to quaternary structure, homomultimerizes and interacts with various extracellular matrix components.

Its subcellular location is the secreted. It localises to the extracellular space. The protein resides in the extracellular matrix. Functionally, incorporated into fibronectin-containing matrix fibers. May play a role in cell adhesion and migration along protein fibers within the extracellular matrix (ECM). Could be important for certain developmental processes and contribute to the supramolecular organization of ECM architecture, in particular to those of basement membranes. The protein is Fibulin-1 (FBLN1) of Gallus gallus (Chicken).